Reading from the N-terminus, the 198-residue chain is Na(+)-translocating NADH-quinone reductase subunit E (198 aa).

6 helical membrane-spanning segments follow: residues 11–31 (SIFIENMALSFFLGMCTFLAV), 39–59 (FGLGVAVVVVLTLAVPLNNLV), 77–97 (FLNFITFIGVIAALVQILEMV), 110–130 (GIFLPLITVNCAIFGGVSFMV), 140–160 (IVYGFGSGVGWMLAIVALAGI), and 176–196 (LGITFITVGLMALGFMSFSGV).

This sequence belongs to the NqrDE/RnfAE family. Composed of six subunits; NqrA, NqrB, NqrC, NqrD, NqrE and NqrF.

Its subcellular location is the cell inner membrane. The enzyme catalyses a ubiquinone + n Na(+)(in) + NADH + H(+) = a ubiquinol + n Na(+)(out) + NAD(+). Its function is as follows. NQR complex catalyzes the reduction of ubiquinone-1 to ubiquinol by two successive reactions, coupled with the transport of Na(+) ions from the cytoplasm to the periplasm. NqrA to NqrE are probably involved in the second step, the conversion of ubisemiquinone to ubiquinol. This Aliivibrio salmonicida (strain LFI1238) (Vibrio salmonicida (strain LFI1238)) protein is Na(+)-translocating NADH-quinone reductase subunit E.